Consider the following 212-residue polypeptide: Pyridoxine/pyridoxamine 5'-phosphate oxidase (212 aa).

Substrate is bound by residues Arg-8–Tyr-11 and Lys-66. FMN is bound by residues Arg-61 to Lys-66, Phe-76 to Thr-77, Arg-82, Lys-83, and Gln-105. Substrate is bound by residues Tyr-123, Arg-127, and Ser-131. Residues Gln-140–Ser-141 and Trp-185 each bind FMN. Residue Arg-191–His-193 coordinates substrate. FMN is bound at residue Arg-195.

It belongs to the pyridoxamine 5'-phosphate oxidase family. In terms of assembly, homodimer. FMN is required as a cofactor.

The catalysed reaction is pyridoxamine 5'-phosphate + O2 + H2O = pyridoxal 5'-phosphate + H2O2 + NH4(+). It catalyses the reaction pyridoxine 5'-phosphate + O2 = pyridoxal 5'-phosphate + H2O2. The protein operates within cofactor metabolism; pyridoxal 5'-phosphate salvage; pyridoxal 5'-phosphate from pyridoxamine 5'-phosphate: step 1/1. It functions in the pathway cofactor metabolism; pyridoxal 5'-phosphate salvage; pyridoxal 5'-phosphate from pyridoxine 5'-phosphate: step 1/1. Catalyzes the oxidation of either pyridoxine 5'-phosphate (PNP) or pyridoxamine 5'-phosphate (PMP) into pyridoxal 5'-phosphate (PLP). In Shewanella sp. (strain MR-4), this protein is Pyridoxine/pyridoxamine 5'-phosphate oxidase.